Reading from the N-terminus, the 103-residue chain is Small ribosomal subunit protein uS10 (103 aa).

This sequence belongs to the universal ribosomal protein uS10 family. As to quaternary structure, part of the 30S ribosomal subunit.

Functionally, involved in the binding of tRNA to the ribosomes. This chain is Small ribosomal subunit protein uS10, found in Ruthia magnifica subsp. Calyptogena magnifica.